The primary structure comprises 170 residues: uncharacterized protein (170 aa).

An N-terminal signal peptide occupies residues 1-28 (MTGGVMSQKFVVGAGLLVCSVCSLSAMA).

It belongs to the fimbrial protein family.

In terms of biological role, part of the yfcOPQRSUV fimbrial operon. Could contribute to adhesion to various surfaces in specific environmental niches. Increases adhesion to eukaryotic T24 bladder epithelial cells in the absence of fim genes. This is an uncharacterized protein from Escherichia coli (strain K12).